Here is a 461-residue protein sequence, read N- to C-terminus: MSTPTISADTTAQNATSTEVREDVNKRGNIDNYIYGPDERVTTYFVREIRPCAAFSKLPVLLTNGNGMKKFGGTFTMPINASGDYLLSLTAYATLSAGTITGAGDASVVSWLPKLGHKLIKSVKLKIDGKPLVELSSSFMDMWSEFMIDSGNYEAYNNMVGGEYEFNKDRINNKSVVLPIPMYFSRDTGIALPIGAMVNNRVTVEFVFRKVTDLLVLENKPATGAGTGVVRTLTEADFSVVPTIASFEVVADFAVVTDFEIDRTSCTPHYMYMEKPVDVPATELVKPTDGTTAPDTMSFEIEHTNGIVKALFFGVRNITRPEYLDFYKVGLPRFNLGAREDVGTATVSRIGIKCNDKYRVPLLPSEHFVYTEPYHAAKRVPTTNNGLYMYSFALDLHTIDPKGSINPSNFNSNISVVLRPSETLNAATTERFEFNATVLTGYILYVENGNLRKIDNGGDFN.

A compositionally biased stretch (polar residues) spans 1-18 (MSTPTISADTTAQNATST). The interval 1–22 (MSTPTISADTTAQNATSTEVRE) is disordered.

The protein resides in the virion. Its function is as follows. Major protein of the capsid. The protein is Major capsid protein (MCP) of Spodoptera frugiperda ascovirus 1a (SfAV-1a).